A 441-amino-acid polypeptide reads, in one-letter code: MGISKDRIKFNVGGRLFETTATTLANAGRDSFFGALFDDEWNLSPLEDSILFVDRNSDCFAVLLDLLRTGDLNVPANIPERLLHREASFYGLLDHVRTAKWGPFDGNRLRLSDSVKGIAPGDGTAIRAGPDGGCCVAHGSVVHVFDWMLEEHSPINLDYQRVNDVGWIDSDNIVLSACEKLGRGDGGMGLFSSSSGDLRYKFQVCHENQVKSYTAGALSFSPDYEIFASCKGRSNEYGIGVWDQITGKQTDFFYESPGWSLGDADKLQWLNGKNCLLVATLFPRKDNCYISLLDFRDKNMVWSWSDIGSPMAIDEKRVRDAIAMEDSNSICVVNEFEDLGFIDLRMYGGSVRWSSRSKLMKSKMPDEPCYPKLALHEGQLFSSMNDSISVFCGPDWVLTSRLRRSYGGSICDFSIGGDRLFALHSEENVFDVWETPPCPII.

Residues 6-76 form the BTB domain; the sequence is DRIKFNVGGR…LRTGDLNVPA (71 aa).

Its pathway is protein modification; protein ubiquitination. Functionally, may act as a substrate-specific adapter of an E3 ubiquitin-protein ligase complex (CUL3-RBX1-BTB) which mediates the ubiquitination and subsequent proteasomal degradation of target proteins. In Arabidopsis thaliana (Mouse-ear cress), this protein is BTB/POZ domain-containing protein At2g24240.